The following is a 228-amino-acid chain: Max-interacting protein 1 (228 aa).

2 disordered regions span residues 30-76 (YASS…NELE) and 160-228 (SIGS…SFAS). The segment covering 43–56 (QHSKPPRRLSRAQK) has biased composition (basic residues). Positions 57–70 (HSSGSSNTSTANRS) are enriched in polar residues. Residues 67–119 (ANRSTHNELEKNRRAHLRLCLERLKVLIPLGPDCTRHTTLGLLNKAKAHIKKL) enclose the bHLH domain. The segment covering 173–183 (EREEIEVDVES) has biased composition (acidic residues). Positions 207–228 (SLQSVGSDEGYSSASVKLSFAS) are enriched in polar residues.

Efficient DNA binding requires dimerization with another bHLH protein. Binds DNA as a heterodimer with MAX. Interacts with SMC3. Interacts with RNF17.

The protein localises to the nucleus. Transcriptional repressor. MXI1 binds with MAX to form a sequence-specific DNA-binding protein complex which recognizes the core sequence 5'-CAC[GA]TG-3'. MXI1 thus antagonizes MYC transcriptional activity by competing for MAX. Isoform Short, which lacks a segment, has a much stronger suppressive potential and associates with a SIN3 homologous protein. This Mus musculus (Mouse) protein is Max-interacting protein 1 (Mxi1).